We begin with the raw amino-acid sequence, 212 residues long: uncharacterized protein (212 aa).

Residues 5-25 (IFIILIAVLLIGVNIKKIAAA) form a helical membrane-spanning segment.

Its subcellular location is the membrane. This is an uncharacterized protein from Borreliella burgdorferi (strain ATCC 35210 / DSM 4680 / CIP 102532 / B31) (Borrelia burgdorferi).